Reading from the N-terminus, the 93-residue chain is Small integral membrane protein 36 (93 aa).

A helical transmembrane segment spans residues Leu-14–Leu-34. The tract at residues Ser-70–Val-93 is disordered.

It localises to the membrane. This chain is Small integral membrane protein 36, found in Mus musculus (Mouse).